The sequence spans 124 residues: Small ribosomal subunit protein uS12 (124 aa).

The segment at 1 to 32 (MPTINQLVRKGRRDKTAKVKTAALKGSPQRRG) is disordered. Aspartate 89 is modified (3-methylthioaspartic acid). Positions 104–124 (TQGVKGRKQARSRYGAKKEKS) are disordered. Basic residues predominate over residues 108–118 (KGRKQARSRYG).

This sequence belongs to the universal ribosomal protein uS12 family. In terms of assembly, part of the 30S ribosomal subunit. Contacts proteins S8 and S17. May interact with IF1 in the 30S initiation complex.

In terms of biological role, with S4 and S5 plays an important role in translational accuracy. Interacts with and stabilizes bases of the 16S rRNA that are involved in tRNA selection in the A site and with the mRNA backbone. Located at the interface of the 30S and 50S subunits, it traverses the body of the 30S subunit contacting proteins on the other side and probably holding the rRNA structure together. The combined cluster of proteins S8, S12 and S17 appears to hold together the shoulder and platform of the 30S subunit. The protein is Small ribosomal subunit protein uS12 of Rhodococcus erythropolis (strain PR4 / NBRC 100887).